Consider the following 243-residue polypeptide: DUF724 domain-containing protein 5 (243 aa).

Over residues 1 to 24 the composition is skewed to basic and acidic residues; that stretch reads MREKHYSEDNSRKRKRGELEHNSD. Residues 1 to 51 are disordered; the sequence is MREKHYSEDNSRKRKRGELEHNSDLNETVLPSDWTPDPVKNFAADDDDEET. The region spanning 59–243 is the DUF724 domain; sequence VLPFVKKSPV…DLGVELEDVE (185 aa). A coiled-coil region spans residues 174 to 223; the sequence is KEMKDESSKKHKAEQEFGEMERKILEVKNKVLELQKQEAALEKQKDATYE.

Homodimer. In terms of tissue distribution, expressed in leaves, flowers and siliques.

The protein resides in the nucleus. Its function is as follows. May be involved in the polar growth of plant cells via transportation of RNAs. The sequence is that of DUF724 domain-containing protein 5 from Arabidopsis thaliana (Mouse-ear cress).